A 909-amino-acid chain; its full sequence is Myb-like protein Q (909 aa).

Disordered regions lie at residues 15 to 65 (TTNN…QQQQ), 84 to 149 (QQQN…QQIL), and 216 to 280 (SAPS…KGPW). Low complexity predominate over residues 17 to 46 (NNNSNNNNNNNNNNNNNNNNNNNNNINQNH). The segment covering 47 to 56 (QHQHQHHHHQ) has biased composition (basic residues). Low complexity predominate over residues 84 to 126 (QQQNYGESTTSTSMIPPSITTSLTPLTPTLSSQPQNIQQQQQQ). The segment covering 127–139 (QHHHQQQHHHHHQ) has biased composition (basic residues). Over residues 216 to 226 (SAPSTPLSMSP) the composition is skewed to polar residues. HTH myb-type domains lie at 272 to 327 (SPGI…SPEV) and 328 to 378 (RKTN…LKKI). 2 consecutive DNA-binding regions (H-T-H motif) follow at residues 300-323 (WSSI…FNHL) and 351-374 (WTAI…NSTL). Residues 379 to 389 (GGDSKSLNKEK) are compositionally biased toward basic and acidic residues. Disordered stretches follow at residues 379–482 (GGDS…NTAI), 497–531 (QTTP…QTQQ), 616–642 (SMEQ…QQQQ), 672–748 (YQQQ…HPIE), and 826–855 (LNTT…IPTP). The segment covering 390-401 (DDDDDDDEDAED) has biased composition (acidic residues). Low complexity-rich tracts occupy residues 415–431 (SSSS…TNSS) and 444–482 (STTT…NTAI). Over residues 497–508 (QTTPNSSPSLSS) the composition is skewed to polar residues. Low complexity-rich tracts occupy residues 622 to 642 (YQQQ…QQQQ), 672 to 726 (YQQQ…QQQQ), 733 to 744 (NSNNTDTTFSNS), and 826 to 851 (LNTT…NNNN).

It localises to the nucleus. This Dictyostelium discoideum (Social amoeba) protein is Myb-like protein Q (mybQ).